Consider the following 500-residue polypeptide: Prostacyclin synthase (500 aa).

Residues 1 to 20 (MAWAALLGLLAALLLLLLLS) form a helical membrane-spanning segment. Residues R106, L112, N287, 358–359 (TR), and R382 each bind substrate. Position 441 (C441) interacts with heme.

The protein belongs to the cytochrome P450 family. Requires heme as cofactor. In terms of tissue distribution, widely expressed; particularly abundant in ovary, heart, skeletal muscle, lung and prostate.

The protein resides in the endoplasmic reticulum membrane. It carries out the reaction prostaglandin H2 = prostaglandin I2. The enzyme catalyses a hydroperoxyeicosatetraenoate = an oxoeicosatetraenoate + H2O. It catalyses the reaction (15S)-hydroperoxy-(5Z,8Z,11Z,13E)-eicosatetraenoate = 15-oxo-(5Z,8Z,11Z,13E)-eicosatetraenoate + H2O. The catalysed reaction is (15S)-hydroperoxy-(5Z,8Z,11Z,13E)-eicosatetraenoate + AH2 = (15S)-hydroxy-(5Z,8Z,11Z,13E)-eicosatetraenoate + A + H2O. Its function is as follows. Catalyzes the biosynthesis and metabolism of eicosanoids. Catalyzes the isomerization of prostaglandin H2 to prostacyclin (= prostaglandin I2), a potent mediator of vasodilation and inhibitor of platelet aggregation. Additionally, displays dehydratase activity, toward hydroperoxyeicosatetraenoates (HPETEs), especially toward (15S)-hydroperoxy-(5Z,8Z,11Z,13E)-eicosatetraenoate (15(S)-HPETE). The chain is Prostacyclin synthase (PTGIS) from Homo sapiens (Human).